Here is a 479-residue protein sequence, read N- to C-terminus: Proline--tRNA ligase (479 aa).

This sequence belongs to the class-II aminoacyl-tRNA synthetase family. ProS type 3 subfamily. Homodimer.

The protein resides in the cytoplasm. It carries out the reaction tRNA(Pro) + L-proline + ATP = L-prolyl-tRNA(Pro) + AMP + diphosphate. Its function is as follows. Catalyzes the attachment of proline to tRNA(Pro) in a two-step reaction: proline is first activated by ATP to form Pro-AMP and then transferred to the acceptor end of tRNA(Pro). This Mesomycoplasma hyopneumoniae (strain 7448) (Mycoplasma hyopneumoniae) protein is Proline--tRNA ligase.